Reading from the N-terminus, the 105-residue chain is Large ribosomal subunit protein eL33 (105 aa).

The protein belongs to the eukaryotic ribosomal protein eL33 family.

Functionally, the protein was found to bind to both initiator and elongator tRNAs and consequently was assigned to the P site or P and A site. The sequence is that of Large ribosomal subunit protein eL33 (rpl35a) from Dictyostelium discoideum (Social amoeba).